Here is a 453-residue protein sequence, read N- to C-terminus: Na(+)/H(+) antiporter NhaA 2 (453 aa).

Helical transmembrane passes span 23–43 (FLHI…AALI), 74–94 (LHFW…GMEI), 111–131 (LPMA…LSFG), 139–159 (GWAV…ALLG), 168–188 (VFLL…IAFF), 191–211 (GGLD…VIGL), 214–234 (IGVG…LGIL), 235–255 (LTGA…PVTA), 316–336 (VAFG…LSGV), 345–365 (WVMI…IVSV), 386–406 (IMLV…IANL), and 419–439 (LGVL…GVWS).

It belongs to the NhaA Na(+)/H(+) (TC 2.A.33) antiporter family.

The protein localises to the cell inner membrane. It catalyses the reaction Na(+)(in) + 2 H(+)(out) = Na(+)(out) + 2 H(+)(in). Na(+)/H(+) antiporter that extrudes sodium in exchange for external protons. The chain is Na(+)/H(+) antiporter NhaA 2 from Pseudomonas putida (strain ATCC 47054 / DSM 6125 / CFBP 8728 / NCIMB 11950 / KT2440).